A 423-amino-acid chain; its full sequence is UDP-N-acetylglucosamine 1-carboxyvinyltransferase (423 aa).

Lys-22–Asn-23 is a phosphoenolpyruvate binding site. A UDP-N-acetyl-alpha-D-glucosamine-binding site is contributed by Arg-93. Cys-117 serves as the catalytic Proton donor. 2-(S-cysteinyl)pyruvic acid O-phosphothioketal is present on Cys-117. Residues Arg-122–Leu-126, Asp-308, and Ile-330 each bind UDP-N-acetyl-alpha-D-glucosamine.

It belongs to the EPSP synthase family. MurA subfamily.

The protein resides in the cytoplasm. The catalysed reaction is phosphoenolpyruvate + UDP-N-acetyl-alpha-D-glucosamine = UDP-N-acetyl-3-O-(1-carboxyvinyl)-alpha-D-glucosamine + phosphate. Its pathway is cell wall biogenesis; peptidoglycan biosynthesis. Functionally, cell wall formation. Adds enolpyruvyl to UDP-N-acetylglucosamine. This chain is UDP-N-acetylglucosamine 1-carboxyvinyltransferase, found in Maricaulis maris (strain MCS10) (Caulobacter maris).